We begin with the raw amino-acid sequence, 138 residues long: Basic phospholipase A2 B (138 aa).

The N-terminal stretch at 1-16 is a signal peptide; the sequence is MRALWIVAVLLLGVEG. Intrachain disulfides connect C42–C131, C44–C60, C59–C111, C65–C138, C66–C104, C73–C97, and C91–C102. Residues Y43, G45, and G47 each coordinate Ca(2+). The active site involves H63. Position 64 (D64) interacts with Ca(2+). The active site involves D105.

Belongs to the phospholipase A2 family. Group II subfamily. D49 sub-subfamily. It depends on Ca(2+) as a cofactor. In terms of tissue distribution, expressed by the venom gland.

Its subcellular location is the secreted. The catalysed reaction is a 1,2-diacyl-sn-glycero-3-phosphocholine + H2O = a 1-acyl-sn-glycero-3-phosphocholine + a fatty acid + H(+). Functionally, snake venom phospholipase A2 (PLA2) that shows potent hemolytic activity, and exhibits medium anticoagulant effects by binding to factor Xa (F10) and inhibiting the prothrombinase activity (IC(50) is 90 nM). It is one of the few phospholipases A2 capable of hydrolyzing the phospholipids of E.coli membranes in the presence of a bactericidal/permeability-increasing protein (BPI) of neutrophils. PLA2 catalyzes the calcium-dependent hydrolysis of the 2-acyl groups in 3-sn-phosphoglycerides. This Gloydius halys (Chinese water mocassin) protein is Basic phospholipase A2 B.